A 288-amino-acid chain; its full sequence is Fructose-bisphosphate aldolase (288 aa).

Serine 49 is a D-glyceraldehyde 3-phosphate binding site. Aspartate 84 serves as the catalytic Proton donor. The Zn(2+) site is built by histidine 85, aspartate 105, glutamate 135, and histidine 177. Glycine 178 provides a ligand contact to dihydroxyacetone phosphate. Residue histidine 206 participates in Zn(2+) binding. Residues 207-209 (GGS) and 228-231 (NINT) each bind dihydroxyacetone phosphate.

Belongs to the class II fructose-bisphosphate aldolase family. Homodimer. The cofactor is Zn(2+).

It catalyses the reaction beta-D-fructose 1,6-bisphosphate = D-glyceraldehyde 3-phosphate + dihydroxyacetone phosphate. It functions in the pathway carbohydrate degradation; glycolysis; D-glyceraldehyde 3-phosphate and glycerone phosphate from D-glucose: step 4/4. In terms of biological role, catalyzes the aldol condensation of dihydroxyacetone phosphate (DHAP or glycerone-phosphate) with glyceraldehyde 3-phosphate (G3P) to form fructose 1,6-bisphosphate (FBP) in gluconeogenesis and the reverse reaction in glycolysis. The polypeptide is Fructose-bisphosphate aldolase (fba) (Mycoplasma pneumoniae (strain ATCC 29342 / M129 / Subtype 1) (Mycoplasmoides pneumoniae)).